Here is a 353-residue protein sequence, read N- to C-terminus: Peptide chain release factor 1 (353 aa).

Residue Gln-230 is modified to N5-methylglutamine.

This sequence belongs to the prokaryotic/mitochondrial release factor family. In terms of processing, methylated by PrmC. Methylation increases the termination efficiency of RF1.

Its subcellular location is the cytoplasm. In terms of biological role, peptide chain release factor 1 directs the termination of translation in response to the peptide chain termination codons UAG and UAA. The sequence is that of Peptide chain release factor 1 from Leptospira biflexa serovar Patoc (strain Patoc 1 / ATCC 23582 / Paris).